The sequence spans 278 residues: Acyl-[acyl-carrier-protein]--UDP-N-acetylglucosamine O-acyltransferase (278 aa).

Belongs to the transferase hexapeptide repeat family. LpxA subfamily. In terms of assembly, homotrimer.

The protein localises to the cytoplasm. It catalyses the reaction a (3R)-hydroxyacyl-[ACP] + UDP-N-acetyl-alpha-D-glucosamine = a UDP-3-O-[(3R)-3-hydroxyacyl]-N-acetyl-alpha-D-glucosamine + holo-[ACP]. Its pathway is glycolipid biosynthesis; lipid IV(A) biosynthesis; lipid IV(A) from (3R)-3-hydroxytetradecanoyl-[acyl-carrier-protein] and UDP-N-acetyl-alpha-D-glucosamine: step 1/6. Its function is as follows. Involved in the biosynthesis of lipid A, a phosphorylated glycolipid that anchors the lipopolysaccharide to the outer membrane of the cell. This is Acyl-[acyl-carrier-protein]--UDP-N-acetylglucosamine O-acyltransferase from Brucella anthropi (strain ATCC 49188 / DSM 6882 / CCUG 24695 / JCM 21032 / LMG 3331 / NBRC 15819 / NCTC 12168 / Alc 37) (Ochrobactrum anthropi).